The chain runs to 345 residues: Phosphoribosylformylglycinamidine cyclo-ligase (345 aa).

It belongs to the AIR synthase family.

It is found in the cytoplasm. The enzyme catalyses 2-formamido-N(1)-(5-O-phospho-beta-D-ribosyl)acetamidine + ATP = 5-amino-1-(5-phospho-beta-D-ribosyl)imidazole + ADP + phosphate + H(+). The protein operates within purine metabolism; IMP biosynthesis via de novo pathway; 5-amino-1-(5-phospho-D-ribosyl)imidazole from N(2)-formyl-N(1)-(5-phospho-D-ribosyl)glycinamide: step 2/2. The protein is Phosphoribosylformylglycinamidine cyclo-ligase of Pseudoalteromonas atlantica (strain T6c / ATCC BAA-1087).